Reading from the N-terminus, the 291-residue chain is Fructose-1,6-bisphosphatase class 1 1 (291 aa).

Positions 78, 95, 97, and 98 each coordinate Mg(2+). Residues 98–101 (DGSS), Tyr203, and Lys233 each bind substrate. Glu239 contributes to the Mg(2+) binding site.

The protein belongs to the FBPase class 1 family. In terms of assembly, homotetramer. The cofactor is Mg(2+).

It localises to the cytoplasm. It catalyses the reaction beta-D-fructose 1,6-bisphosphate + H2O = beta-D-fructose 6-phosphate + phosphate. The protein operates within carbohydrate biosynthesis; gluconeogenesis. The protein is Fructose-1,6-bisphosphatase class 1 1 of Haloarcula marismortui (strain ATCC 43049 / DSM 3752 / JCM 8966 / VKM B-1809) (Halobacterium marismortui).